Reading from the N-terminus, the 545-residue chain is MSAYARALDALRQHRRETEDFDLRQAFGADPDRFSRCSAALDDMLLDYSKCAVSDETLALLDKIAEAAGVIERREEMFSAKRINVTENRAVLHTALRNDSTRPVMLDGKDVMPDVEAVLAAMSTFSEGIRSGTIKAATGKSFTDVVNIGIGGSDLGPAMATLALAPYHDGPRLHYVSNVDGAHIHDTLKALDPDTTLFIIASKTFTTIETMTNAGTARSWIAEKLGQDAVGSHFAAVSTALDKVAAFGIDESRVFGFWDWVGGRYSLWSAIGLPIMIAIGPENFRRFLDGAELMDRHFREAPSRENLPMMLGLIGFWHRVICGYPARAVIPYDQRLARLPAYLQQLDMESNGKRVTFEGESVTVPTGPLVWGEPGTNGQHAFFQLLHQGTDIIPVEFMIAARGHEPELKHHHDLLIANCLAQSEALMKGRTLQEAKAQLLAKGMSEAEADKLAPHRVFPGNRPSVTIIYEKLDPFTLGRLIALYEHRVFVEAALFRINAFDQWGVELGKELATELLPVVEGKKDASGRDSSTAGLVAQIAALRDS.

Residue E349 is the Proton donor of the active site. Catalysis depends on residues H380 and K509.

Belongs to the GPI family.

The protein localises to the cytoplasm. It carries out the reaction alpha-D-glucose 6-phosphate = beta-D-fructose 6-phosphate. It functions in the pathway carbohydrate biosynthesis; gluconeogenesis. It participates in carbohydrate degradation; glycolysis; D-glyceraldehyde 3-phosphate and glycerone phosphate from D-glucose: step 2/4. Catalyzes the reversible isomerization of glucose-6-phosphate to fructose-6-phosphate. The polypeptide is Glucose-6-phosphate isomerase (Chelativorans sp. (strain BNC1)).